The following is a 131-amino-acid chain: Histone H2B.2 (131 aa).

The span at 1–19 shows a compositional bias: basic and acidic residues; it reads MSSAAEKKPASKAPAEKKP. Residues 1 to 37 are disordered; sequence MSSAAEKKPASKAPAEKKPAAKKTSTSVDGKKRSKVR. Residues lysine 7 and lysine 8 each carry the N6-acetyllysine; alternate modification. Residues lysine 7 and lysine 8 each participate in a glycyl lysine isopeptide (Lys-Gly) (interchain with G-Cter in SUMO); alternate cross-link. Position 11 is a phosphoserine (serine 11). N6-acetyllysine is present on lysine 12. An N6-acetyllysine; alternate mark is found at lysine 17, lysine 18, lysine 22, and lysine 23. Glycyl lysine isopeptide (Lys-Gly) (interchain with G-Cter in SUMO); alternate cross-links involve residues lysine 17 and lysine 18. Lysine 22 bears the N6-butyryllysine; alternate mark. At lysine 23 the chain carries N6-methyllysine; alternate. Residue lysine 35 is modified to N6-succinyllysine. Lysine 38 carries the post-translational modification N6,N6-dimethyllysine. The residue at position 47 (lysine 47) is an N6-succinyllysine. A Glycyl lysine isopeptide (Lys-Gly) (interchain with G-Cter in ubiquitin) cross-link involves residue lysine 124.

Belongs to the histone H2B family. The nucleosome is a histone octamer containing two molecules each of H2A, H2B, H3 and H4 assembled in one H3-H4 heterotetramer and two H2A-H2B heterodimers. The octamer wraps approximately 147 bp of DNA. Interacts with NAP1. Post-translationally, monoubiquitinated by the RAD6/UBC2-BRE1 complex to form H2BK123ub1. H2BK123ub1 gives a specific tag for epigenetic transcriptional activation and is also prerequisite for H3K4me and H3K79me formation. H2BK123ub1 also modulates the formation of double-strand breaks during meiosis and is a prerequisite for DNA-damage checkpoint activation. Deubiquitination is performed by UBP8 in presence of SGF11. Phosphorylated by STE20 to form H2BS10ph during progression through meiotic prophase. May be correlated with chromosome condensation. H2BS10ph is also formed after H(2)O(2) treatment, and is a step leading to apoptosis. In terms of processing, acetylated by GCN5, a component of the SAGA complex, to form H2BK11ac and H2BK16ac. H2BK16ac can also be formed by ESA1, a component of the NuA4 histone acetyltransferase (HAT) complex. Acetylation of N-terminal lysines and particularly formation of H2BK11acK16ac has a positive effect on transcription. Post-translationally, sumoylation to form H2BK6su or H2BK7su, and probably also H2BK16su or H2BK17su, occurs preferentially near the telomeres and represses gene transcription.

The protein resides in the nucleus. It is found in the chromosome. Functionally, core component of nucleosome. Nucleosomes wrap and compact DNA into chromatin, limiting DNA accessibility to the cellular machineries which require DNA as a template. Histones thereby play a central role in transcription regulation, DNA repair, DNA replication and chromosomal stability. DNA accessibility is regulated via a complex set of post-translational modifications of histones, also called histone code, and nucleosome remodeling. The polypeptide is Histone H2B.2 (HTB2) (Saccharomyces cerevisiae (strain ATCC 204508 / S288c) (Baker's yeast)).